Consider the following 316-residue polypeptide: Cation efflux system protein CzcD (316 aa).

6 helical membrane passes run 17 to 37 (LKIA…GGVM), 47 to 67 (AAHM…IAIA), 82 to 102 (FEIL…IYIL), 115 to 135 (IEST…LISM), 152 to 172 (YLEV…AIII), and 174 to 194 (FTGW…WVLP).

Belongs to the cation diffusion facilitator (CDF) transporter (TC 2.A.4) family. SLC30A subfamily.

It localises to the cell membrane. Necessary for activation of the czc determinant. The chain is Cation efflux system protein CzcD (czcD) from Alcaligenes sp. (strain CT14).